A 404-amino-acid chain; its full sequence is Putative replication protein C (404 aa).

The interval 249 to 287 (PDQIERHKQNSHPESTNEFEPSSREEQGERPSPAIEPQR) is disordered.

The protein to A.rhizogenes possible replication protein C (RepC).

The sequence is that of Putative replication protein C from Sinorhizobium fredii (strain NBRC 101917 / NGR234).